We begin with the raw amino-acid sequence, 275 residues long: Rhamnulose-1-phosphate aldolase (275 aa).

Residue E117 is part of the active site. The Zn(2+) site is built by H141, H143, and H212.

This sequence belongs to the aldolase class II family. RhaD subfamily. As to quaternary structure, homotetramer. It depends on Zn(2+) as a cofactor.

It is found in the cytoplasm. It carries out the reaction L-rhamnulose 1-phosphate = (S)-lactaldehyde + dihydroxyacetone phosphate. Its pathway is carbohydrate degradation; L-rhamnose degradation; glycerone phosphate from L-rhamnose: step 3/3. Catalyzes the reversible cleavage of L-rhamnulose-1-phosphate to dihydroxyacetone phosphate (DHAP) and L-lactaldehyde. The protein is Rhamnulose-1-phosphate aldolase of Citrobacter koseri (strain ATCC BAA-895 / CDC 4225-83 / SGSC4696).